The sequence spans 241 residues: ATP synthase subunit a (241 aa).

Helical transmembrane passes span 30 to 50 (GQVF…ISLG), 91 to 111 (FIGT…LIPW), 128 to 148 (INTT…AGLS), 193 to 213 (LVVG…VMFL), and 214 to 234 (GLFT…YYIG).

The protein belongs to the ATPase A chain family. In terms of assembly, F-type ATPases have 2 components, CF(1) - the catalytic core - and CF(0) - the membrane proton channel. CF(1) has five subunits: alpha(3), beta(3), gamma(1), delta(1), epsilon(1). CF(0) has four main subunits: a, b, b' and c.

The protein localises to the cellular thylakoid membrane. Functionally, key component of the proton channel; it plays a direct role in the translocation of protons across the membrane. This chain is ATP synthase subunit a, found in Prochlorococcus marinus (strain MIT 9515).